A 219-amino-acid polypeptide reads, in one-letter code: Histone H1.4 (219 aa).

Residues 1–15 (MSETAPAAPAAPAPA) are compositionally biased toward low complexity. The interval 1–41 (MSETAPAAPAAPAPAEKTPVKKKARKSAGAAKRKASGPPVS) is disordered. S2 is subject to N-acetylserine. S2 carries the post-translational modification Phosphoserine. Residue K17 is modified to N6-acetyllysine. Position 18 is a phosphothreonine (T18). The span at 20-35 (VKKKARKSAGAAKRKA) shows a compositional bias: basic residues. K26 is subject to N6-acetyllysine; alternate. Residue K26 is modified to N6-methyllysine; alternate. Residue K34 is modified to N6-(beta-hydroxybutyryl)lysine; alternate. Position 34 is an N6-succinyllysine; alternate (K34). The residue at position 36 (S36) is a Phosphoserine. The H15 domain maps to 36 to 109 (SGPPVSELIT…GASGSFKLNK (74 aa)). Residue K52 is modified to N6-(beta-hydroxybutyryl)lysine. Position 54 is a citrulline (R54). 4 positions are modified to N6-(beta-hydroxybutyryl)lysine: K64, K85, K90, and K106. Residues 92-219 (TLVQTKGTGA…KPKKAAAKKK (128 aa)) form a disordered region. The span at 119–140 (KAKKAGAAKAKKPAGAAKKPKK) shows a compositional bias: basic residues. T146 carries the phosphothreonine modification. 2 stretches are compositionally biased toward basic residues: residues 149–160 (KSAKKTPKKAKK) and 168–185 (KKAK…KKAP). At S150 the chain carries ADP-ribosylserine. S187 bears the Phosphoserine mark. Residues 192–219 (KAVKPKAAKPKTAKPKAAKPKKAAAKKK) are compositionally biased toward basic residues.

This sequence belongs to the histone H1/H5 family. Post-translationally, H1 histones are progressively phosphorylated during the cell cycle, becoming maximally phosphorylated during late G2 phase and M phase, and being dephosphorylated sharply thereafter. In terms of processing, acetylated at Lys-26. Deacetylated at Lys-26 by SIRT1. Citrullination at Arg-54 (H1R54ci) by PADI4 takes place within the DNA-binding site of H1 and results in its displacement from chromatin and global chromatin decondensation, thereby promoting pluripotency and stem cell maintenance. Post-translationally, ADP-ribosylated on Ser-150 in response to DNA damage.

It localises to the nucleus. The protein localises to the chromosome. Histone H1 protein binds to linker DNA between nucleosomes forming the macromolecular structure known as the chromatin fiber. Histones H1 are necessary for the condensation of nucleosome chains into higher-order structured fibers. Also acts as a regulator of individual gene transcription through chromatin remodeling, nucleosome spacing and DNA methylation. The polypeptide is Histone H1.4 (Homo sapiens (Human)).